The following is a 383-amino-acid chain: S-adenosylmethionine synthase (383 aa).

His-15 serves as a coordination point for ATP. Residue Asp-17 coordinates Mg(2+). Glu-43 contacts K(+). Residues Glu-56 and Gln-99 each contribute to the L-methionine site. A flexible loop region spans residues 99–109 (QSPDINQGVDR). ATP is bound by residues 164–166 (DAK), 230–231 (RF), Asp-239, 245–246 (RK), Ala-262, and Lys-266. Position 239 (Asp-239) interacts with L-methionine. Residue Lys-270 participates in L-methionine binding.

This sequence belongs to the AdoMet synthase family. As to quaternary structure, homotetramer; dimer of dimers. It depends on Mg(2+) as a cofactor. K(+) is required as a cofactor.

The protein resides in the cytoplasm. It carries out the reaction L-methionine + ATP + H2O = S-adenosyl-L-methionine + phosphate + diphosphate. It participates in amino-acid biosynthesis; S-adenosyl-L-methionine biosynthesis; S-adenosyl-L-methionine from L-methionine: step 1/1. Its function is as follows. Catalyzes the formation of S-adenosylmethionine (AdoMet) from methionine and ATP. The overall synthetic reaction is composed of two sequential steps, AdoMet formation and the subsequent tripolyphosphate hydrolysis which occurs prior to release of AdoMet from the enzyme. This is S-adenosylmethionine synthase from Shewanella baltica (strain OS223).